A 710-amino-acid chain; its full sequence is Ent-copalyl diphosphate synthase 1 (710 aa).

Residue Lys145 participates in substrate binding. Mg(2+)-binding residues include Asp277 and Asp279. The DXDD motif motif lies at 277-280 (DIDD). A substrate-binding site is contributed by Lys364.

This sequence belongs to the terpene synthase family. Tpsc subfamily. The cofactor is Mg(2+). In terms of tissue distribution, expressed in germinating seeds and leaves.

It carries out the reaction (2E,6E,10E)-geranylgeranyl diphosphate = ent-copalyl diphosphate. It participates in plant hormone biosynthesis; gibberellin biosynthesis. Its pathway is secondary metabolite biosynthesis; terpenoid biosynthesis. Functionally, involved in the biosynthesis of ent-kaurene diterpenoids natural products such as oridonin, miltiradiene, eriocalyxin B and nezukol, known to exhibit antitumor, anti-inflammatory and antibacterial activities, and in the production of gibberellins phytohormones. Catalyzes the conversion of (2E,6E,10E)-geranylgeranyl diphosphate (GGPP) to ent-copalyl diphosphate (ent-CPP). The polypeptide is Ent-copalyl diphosphate synthase 1 (Isodon eriocalyx (Plectranthus eriocalyx)).